A 260-amino-acid chain; its full sequence is MLFLALGSPWAVELPLCGRRTALCAAAALRGPRASVSRASSSSGPSGPVAGWSTGPSGAARLLRRPGRAQIPVYWEGYVRFLNTPSDKSEDGRLIYTGNMARAVFGVKCFSYSTSLIGLTFLPYIFTQNNAISESVPLPIQIIFYGIMGSFTVITPVLLHFITKGYVIRLYHEATTDTYKAITYNAMLAETSTVFHQNDVKIPDAKHVFTTFYAKTKSLLVNPVLFPNREDYIHLMGYDKEEFILYMEETSEEKRHKDDK.

The N-terminal 81 residues, 1 to 81, are a transit peptide targeting the mitochondrion; it reads MLFLALGSPW…PVYWEGYVRF (81 aa). The Mitochondrial matrix segment spans residues 82–102; that stretch reads LNTPSDKSEDGRLIYTGNMAR. The helical transmembrane segment at 103–123 threads the bilayer; it reads AVFGVKCFSYSTSLIGLTFLP. Residues 124-141 are Mitochondrial intermembrane-facing; that stretch reads YIFTQNNAISESVPLPIQ. The chain crosses the membrane as a helical span at residues 142-162; sequence IIFYGIMGSFTVITPVLLHFI. At 163-260 the chain is on the mitochondrial matrix side; sequence TKGYVIRLYH…SEEKRHKDDK (98 aa).

This sequence belongs to the TMEM70 family. Homooligomer. Interacts (homooligomer form) with ATP5MC1; this interaction facilitates the oligomer formation of subunit c/ATP5MC1 (c-ring) and the c-ring membrane insertion and also protects ATP5MC1 against intramitochondrial proteolysis. Interacts with the core subunits TMEM126B, NDUFAF1, ECSIT and ACAD9 of the MCIA complex. Interacts with ATP5MC3, TMEM242 and TIMMDC1. Lower expressed in the heart than in the liver (at protein level).

It localises to the mitochondrion inner membrane. Its function is as follows. Scaffold protein that participates in the c-ring assembly of mitochondrial ATP synthase (F(1)F(0) ATP synthase or complex V) by facilitating the membrane insertion and oligomer formation of the subunit c/ATP5MC1 through its interaction. Therefore, participates in the early stage of mitochondrial ATP synthase biogenesis and also protects subunit c/ATP5MC1 against intramitochondrial proteolysis. In addition, binds the mitochondrial proton-transporting ATP synthase complexes I and may play a role in the stability of its membrane-bound subassemblies. This is Transmembrane protein 70, mitochondrial from Homo sapiens (Human).